The chain runs to 311 residues: Methionyl-tRNA formyltransferase (311 aa).

Position 109-112 (109-112) interacts with (6S)-5,6,7,8-tetrahydrofolate; that stretch reads SKLP.

It belongs to the Fmt family.

It carries out the reaction L-methionyl-tRNA(fMet) + (6R)-10-formyltetrahydrofolate = N-formyl-L-methionyl-tRNA(fMet) + (6S)-5,6,7,8-tetrahydrofolate + H(+). In terms of biological role, attaches a formyl group to the free amino group of methionyl-tRNA(fMet). The formyl group appears to play a dual role in the initiator identity of N-formylmethionyl-tRNA by promoting its recognition by IF2 and preventing the misappropriation of this tRNA by the elongation apparatus. This chain is Methionyl-tRNA formyltransferase (fmt), found in Mycoplasma pneumoniae (strain ATCC 29342 / M129 / Subtype 1) (Mycoplasmoides pneumoniae).